Consider the following 314-residue polypeptide: Taste receptor type 2 member 42 (314 aa).

The Extracellular portion of the chain corresponds to 1-7 (MPTELDK). Residues 8–28 (IFLILAIVEFIIGLLGNVFIG) traverse the membrane as a helical segment. Residues 29-50 (LVNCSEGIKNQKVFSADFILTC) lie on the Cytoplasmic side of the membrane. The chain crosses the membrane as a helical span at residues 51–71 (LAISTIGQLLVILFDSFLVGL). At 72-101 (ASHLYTTYRLGKLVILLWHMTNHLTTWLAT) the chain is on the extracellular side. Residues 102–122 (CLSIFYFFKIAHFPHSLFLWL) traverse the membrane as a helical segment. Over 123 to 127 (RWRMN) the chain is Cytoplasmic. A helical membrane pass occupies residues 128 to 148 (GMIVMLRTLSLFLLIFDSLVL). Topologically, residues 149–187 (KLFIDISLNIIDKSNLTLYFDESKTLYDKLSILKTLLSL) are extracellular. The N-linked (GlcNAc...) asparagine glycan is linked to N163. Residues 188–208 (TSFIPFSLSLTSLLFLFLSLV) traverse the membrane as a helical segment. Residues 209–238 (RHTRNLKLSSLGSRDSSTEAHRRAMKMVMS) are Cytoplasmic-facing. The helical transmembrane segment at 239–259 (FLFLFIVHFFSLQVANWIFFM) threads the bilayer. Residues 260–265 (SWNNKY) are Extracellular-facing. A helical membrane pass occupies residues 266–286 (IKFVMLALNAFPSCHSFILIL). Over 287-314 (GNSKLRQTAVRLLSHLRNYTKTSNPLPL) the chain is Cytoplasmic.

This sequence belongs to the G-protein coupled receptor T2R family.

The protein localises to the membrane. In terms of biological role, receptor that may play a role in the perception of bitterness and is gustducin-linked. May play a role in sensing the chemical composition of the gastrointestinal content. The activity of this receptor may stimulate alpha gustducin, mediate PLC-beta-2 activation and lead to the gating of TRPM5. This chain is Taste receptor type 2 member 42 (TAS2R42), found in Pongo pygmaeus (Bornean orangutan).